A 218-amino-acid chain; its full sequence is Ropporin-1-like protein (218 aa).

The region spanning 17–46 (PELTDILKQFTKAAIRTQPADVLQWSAGYF) is the RIIa domain.

Belongs to the ropporin family. Component of the axonemal radial spoke complex 1 (RS1), at least composed of spoke head proteins RSPH1, RSPH3, RSPH9 and the cilia-specific component RSPH4A or sperm-specific component RSPH6A, spoke stalk proteins RSPH14, DNAJB13, DYDC1, ROPN1L and NME5, and the anchor protein IQUB. May interact with AKAP3. Interacts with FSCB; the interaction increases upon spermatozoa capacitation conditions. Interacts with CFAP61. Sumoylated, sumoylation decreases upon spermatozoa capacitation conditions.

The protein resides in the cell projection. The protein localises to the cilium. Its subcellular location is the flagellum. Functionally, functions as part of axonemal radial spoke complexes that play an important part in the motility of sperm and cilia. Important for male fertility. With ROPN1, involved in fibrous sheath integrity and sperm motility, plays a role in PKA-dependent signaling processes required for spermatozoa capacitation. The chain is Ropporin-1-like protein (ROPN1L) from Bos taurus (Bovine).